The primary structure comprises 371 residues: Putative glutamate--cysteine ligase 2 (371 aa).

Belongs to the glutamate--cysteine ligase type 2 family. YbdK subfamily.

The catalysed reaction is L-cysteine + L-glutamate + ATP = gamma-L-glutamyl-L-cysteine + ADP + phosphate + H(+). In terms of biological role, ATP-dependent carboxylate-amine ligase which exhibits weak glutamate--cysteine ligase activity. This Cupriavidus necator (strain ATCC 17699 / DSM 428 / KCTC 22496 / NCIMB 10442 / H16 / Stanier 337) (Ralstonia eutropha) protein is Putative glutamate--cysteine ligase 2.